The chain runs to 762 residues: ABC-type oligopeptide transporter ABCB9 (762 aa).

8 consecutive transmembrane segments (helical) span residues 7–27, 47–67, 84–104, 116–136, 181–201, 221–241, 315–335, and 412–432; these read VVVT…IYAF, VLDL…ATIG, LVIT…LLLF, FWAL…LWGL, VAFL…ETFL, FTTA…AAGI, VFMF…FPII, and SGLT…HLVI. The ABC transmembrane type-1 domain occupies 184-467; it reads LVAASFFLIV…VGSVYSGLMQ (284 aa). The ABC transporter domain occupies 500 to 736; it reads VDFENVTFTY…GGLYAKLVQR (237 aa). Residue 535 to 542 participates in ATP binding; sequence GPSGSGKS.

Belongs to the ABC transporter superfamily. ABCB family. MHC peptide exporter (TC 3.A.1.209) subfamily. As to quaternary structure, homodimer. Interacts (via TMD0 region) with LAMP1; this interaction strongly stabilizes ABCB9 and protects ABCB9 against lysosomal degradation. Interacts (via TMD0 region) with LAMP2 (isoform LAMP-2B). Interacts (via TMD0) with YIF1B; this interaction allows (but is not essential) the ER-to-Golgi trafficking and strongly depends on a salt bridge within TMD0. Found in testis, particularly in the Sertoli cells of the seminiferous tubules. Also expressed in kidney, brain, heart, lung, spleen, thymus, intestine and testis. Higher expression detected in brain and testis than in thymus and intestine.

The protein resides in the lysosome membrane. The enzyme catalyses a [oligopeptide](in) + ATP + H2O = a [oligopeptide](out) + ADP + phosphate + H(+). ATP-dependent low-affinity peptide transporter which translocates a broad spectrum of peptides from the cytosol to the lysosomal lumen for degradation. Displays a broad peptide length specificity from 6-mer up to at least 59-mer peptides with an optimum of 23-mers. Binds and transports smaller and larger peptides with the same affinity. Favors positively charged, aromatic or hydrophobic residues in the N- and C-terminal positions whereas negatively charged residues as well as asparagine and methionine are not favored. The chain is ABC-type oligopeptide transporter ABCB9 from Rattus norvegicus (Rat).